We begin with the raw amino-acid sequence, 351 residues long: N-acetyl-gamma-glutamyl-phosphate reductase (351 aa).

The active site involves Cys154.

Belongs to the NAGSA dehydrogenase family. Type 1 subfamily.

It is found in the cytoplasm. It catalyses the reaction N-acetyl-L-glutamate 5-semialdehyde + phosphate + NADP(+) = N-acetyl-L-glutamyl 5-phosphate + NADPH + H(+). It participates in amino-acid biosynthesis; L-arginine biosynthesis; N(2)-acetyl-L-ornithine from L-glutamate: step 3/4. In terms of biological role, catalyzes the NADPH-dependent reduction of N-acetyl-5-glutamyl phosphate to yield N-acetyl-L-glutamate 5-semialdehyde. This chain is N-acetyl-gamma-glutamyl-phosphate reductase, found in Prochlorococcus marinus (strain MIT 9301).